A 134-amino-acid chain; its full sequence is Large ribosomal subunit protein uL16c (134 aa).

Residues methionine 1 to histidine 22 are disordered.

This sequence belongs to the universal ribosomal protein uL16 family. Part of the 50S ribosomal subunit.

The protein localises to the plastid. Its subcellular location is the chloroplast. The polypeptide is Large ribosomal subunit protein uL16c (Nicotiana tomentosiformis (Tobacco)).